The following is a 714-amino-acid chain: Glutamine-dependent NAD(+) synthetase (714 aa).

One can recognise a CN hydrolase domain in the interval I5–L275. The Proton acceptor; for glutaminase activity role is filled by E45. The active-site For glutaminase activity is the K114. The active-site Nucleophile; for glutaminase activity is C175. The interval Y329–D714 is ligase. An ATP-binding site is contributed by P359–S366. Residue S361 is part of the active site.

This sequence in the C-terminal section; belongs to the NAD synthetase family.

The catalysed reaction is deamido-NAD(+) + L-glutamine + ATP + H2O = L-glutamate + AMP + diphosphate + NAD(+) + H(+). The protein operates within cofactor biosynthesis; NAD(+) biosynthesis; NAD(+) from deamido-NAD(+) (L-Gln route): step 1/1. The polypeptide is Glutamine-dependent NAD(+) synthetase (QNS1) (Saccharomyces cerevisiae (strain ATCC 204508 / S288c) (Baker's yeast)).